A 646-amino-acid polypeptide reads, in one-letter code: Protein real-time (646 aa).

The PRELI/MSF1 domain maps to 2-175 (VQKYESPVRI…FINELKKEGI (174 aa)). In terms of domain architecture, CRAL-TRIO spans 294 to 471 (TPVVVEKYFP…FLGGSCITMI (178 aa)). Positions 499–646 (HHGLYKSVDL…GFSSNSLQSR (148 aa)) constitute a GOLD domain.

The protein localises to the mitochondrion. This chain is Protein real-time, found in Aedes aegypti (Yellowfever mosquito).